A 530-amino-acid polypeptide reads, in one-letter code: Bifunctional purine biosynthesis protein PurH (530 aa).

One can recognise an MGS-like domain in the interval 1–148; it reads MNNARPIRRA…KNHKDVTIVV (148 aa).

This sequence belongs to the PurH family.

The catalysed reaction is (6R)-10-formyltetrahydrofolate + 5-amino-1-(5-phospho-beta-D-ribosyl)imidazole-4-carboxamide = 5-formamido-1-(5-phospho-D-ribosyl)imidazole-4-carboxamide + (6S)-5,6,7,8-tetrahydrofolate. It carries out the reaction IMP + H2O = 5-formamido-1-(5-phospho-D-ribosyl)imidazole-4-carboxamide. It participates in purine metabolism; IMP biosynthesis via de novo pathway; 5-formamido-1-(5-phospho-D-ribosyl)imidazole-4-carboxamide from 5-amino-1-(5-phospho-D-ribosyl)imidazole-4-carboxamide (10-formyl THF route): step 1/1. The protein operates within purine metabolism; IMP biosynthesis via de novo pathway; IMP from 5-formamido-1-(5-phospho-D-ribosyl)imidazole-4-carboxamide: step 1/1. This Vibrio parahaemolyticus serotype O3:K6 (strain RIMD 2210633) protein is Bifunctional purine biosynthesis protein PurH.